Here is a 575-residue protein sequence, read N- to C-terminus: Transcription factor COE2 (575 aa).

Residues 62–65 (RKSN) are interaction with DNA. A C5-type zinc finger spans residues 150–169 (CRVLLTHEVMCSRCCEKKSC). Interaction with DNA stretches follow at residues 196 to 203 (NCLKTAGN) and 235 to 238 (NNSK). The 84-residue stretch at 253–336 (PCIKAISPSE…KGAPGRFIYT (84 aa)) folds into the IPT/TIG domain. The span at 441–453 (STQGNNQGYIRNT) shows a compositional bias: polar residues. The disordered stretch occupies residues 441–479 (STQGNNQGYIRNTSSISPRGYSSSSTPQQSNYSTSSNSM). Low complexity predominate over residues 454–479 (SSISPRGYSSSSTPQQSNYSTSSNSM).

Belongs to the COE family. As to quaternary structure, forms either a homodimer or a heterodimer with a related family member. Interacts with SIX1. As to expression, in adult expressed in olfactory epithelium and at a much lower level in Purkinje cells of the cerebellum. In embryo expressed in epithalamus, in cells near the ventricular zone of mesencephalon and on the ventral surface of rhombencephalon, in the developing vomeronasal organ, at a lower level in developing spinal cord. Not expressed in developing retina, inner ear, dorsal root ganglia, trigeminal ganglia and glossopharyngeal ganglia.

It is found in the nucleus. Functionally, transcription factor that, in osteoblasts, activates the decoy receptor for RANKL, TNFRSF11B, which in turn regulates osteoclast differentiation. Acts in synergy with the Wnt-responsive LEF1/CTNNB1 pathway. Recognizes variations of the palindromic sequence 5'-ATTCCCNNGGGAATT-3'. The polypeptide is Transcription factor COE2 (Ebf2) (Mus musculus (Mouse)).